We begin with the raw amino-acid sequence, 547 residues long: Aspartate 1-decarboxylase (547 aa).

At Lys338 the chain carries N6-(pyridoxal phosphate)lysine.

The protein belongs to the group II decarboxylase family. The cofactor is pyridoxal 5'-phosphate.

It catalyses the reaction L-aspartate + H(+) = beta-alanine + CO2. It participates in cofactor biosynthesis; (R)-pantothenate biosynthesis; beta-alanine from L-aspartate: step 1/1. Functionally, catalyzes the pyridoxal-dependent decarboxylation of aspartate to produce beta-alanine. Has weak activity with glutamate. In Aliivibrio fischeri (strain ATCC 700601 / ES114) (Vibrio fischeri), this protein is Aspartate 1-decarboxylase.